The following is a 504-amino-acid chain: Glycerol kinase (504 aa).

Thr-14 contributes to the ADP binding site. The ATP site is built by Thr-14, Thr-15, and Ser-16. Thr-14 is a binding site for sn-glycerol 3-phosphate. Arg-18 is a binding site for ADP. Residues Arg-84, Glu-85, Tyr-136, and Asp-246 each coordinate sn-glycerol 3-phosphate. Glycerol contacts are provided by Arg-84, Glu-85, Tyr-136, Asp-246, and Gln-247. Thr-268 and Gly-311 together coordinate ADP. ATP-binding residues include Thr-268, Gly-311, Gln-315, and Gly-412. ADP contacts are provided by Gly-412 and Asn-416.

The protein belongs to the FGGY kinase family.

It catalyses the reaction glycerol + ATP = sn-glycerol 3-phosphate + ADP + H(+). The protein operates within polyol metabolism; glycerol degradation via glycerol kinase pathway; sn-glycerol 3-phosphate from glycerol: step 1/1. With respect to regulation, inhibited by fructose 1,6-bisphosphate (FBP). Key enzyme in the regulation of glycerol uptake and metabolism. Catalyzes the phosphorylation of glycerol to yield sn-glycerol 3-phosphate. This is Glycerol kinase from Aliivibrio fischeri (strain ATCC 700601 / ES114) (Vibrio fischeri).